Reading from the N-terminus, the 198-residue chain is Recombination protein RecR (198 aa).

Residues 57–72 (CSVCGHITENDPCYIC) form a C4-type zinc finger. One can recognise a Toprim domain in the interval 80–175 (SVICVVEDDK…KVTRLAQGLS (96 aa)).

It belongs to the RecR family.

May play a role in DNA repair. It seems to be involved in an RecBC-independent recombinational process of DNA repair. It may act with RecF and RecO. The polypeptide is Recombination protein RecR (Staphylococcus aureus (strain JH1)).